We begin with the raw amino-acid sequence, 74 residues long: Putative membrane protein insertion efficiency factor (74 aa).

It belongs to the UPF0161 family.

It localises to the cell inner membrane. Could be involved in insertion of integral membrane proteins into the membrane. The polypeptide is Putative membrane protein insertion efficiency factor (Anaeromyxobacter sp. (strain Fw109-5)).